Reading from the N-terminus, the 473-residue chain is Photosystem II CP43 reaction center protein (473 aa).

The propeptide occupies 1-14; sequence MKTLYSLRRFYPVE. Threonine 15 bears the N-acetylthreonine mark. Phosphothreonine is present on threonine 15. 5 helical membrane passes run 69 to 93, 134 to 155, 178 to 200, 255 to 275, and 291 to 312; these read LFEVAHFVPEKPMYEQGLILLPHLA, LLGPETLEESFPFFGYVWKDRN, KALYFGGVYDTWAPGGGDVRKIT, KPFAWARRAFVWSGEAYLSYS, and WFNNTAYPSEFYGPTGPEASQA. Residue glutamate 367 coordinates [CaMn4O5] cluster. The chain crosses the membrane as a helical span at residues 447 to 471; it reads RARAAAAGFEKGIDRDFEPVLSMTP.

The protein belongs to the PsbB/PsbC family. PsbC subfamily. PSII is composed of 1 copy each of membrane proteins PsbA, PsbB, PsbC, PsbD, PsbE, PsbF, PsbH, PsbI, PsbJ, PsbK, PsbL, PsbM, PsbT, PsbX, PsbY, PsbZ, Psb30/Ycf12, at least 3 peripheral proteins of the oxygen-evolving complex and a large number of cofactors. It forms dimeric complexes. It depends on Binds multiple chlorophylls and provides some of the ligands for the Ca-4Mn-5O cluster of the oxygen-evolving complex. It may also provide a ligand for a Cl- that is required for oxygen evolution. PSII binds additional chlorophylls, carotenoids and specific lipids. as a cofactor.

It is found in the plastid. Its subcellular location is the chloroplast thylakoid membrane. Functionally, one of the components of the core complex of photosystem II (PSII). It binds chlorophyll and helps catalyze the primary light-induced photochemical processes of PSII. PSII is a light-driven water:plastoquinone oxidoreductase, using light energy to abstract electrons from H(2)O, generating O(2) and a proton gradient subsequently used for ATP formation. In Drimys granadensis, this protein is Photosystem II CP43 reaction center protein.